The primary structure comprises 185 residues: CDP-diacylglycerol--glycerol-3-phosphate 3-phosphatidyltransferase (185 aa).

Transmembrane regions (helical) follow at residues 7-26 (IFLTIFRVILIPFFVIAFYL), 33-52 (FITTLIFFIAGVTDWLDGYL), 89-108 (FWITIPAIIMISREIIISAL), and 151-172 (IAAIILLYIAAILTIWSMIQYL).

This sequence belongs to the CDP-alcohol phosphatidyltransferase class-I family.

It is found in the cell membrane. The catalysed reaction is a CDP-1,2-diacyl-sn-glycerol + sn-glycerol 3-phosphate = a 1,2-diacyl-sn-glycero-3-phospho-(1'-sn-glycero-3'-phosphate) + CMP + H(+). The protein operates within phospholipid metabolism; phosphatidylglycerol biosynthesis; phosphatidylglycerol from CDP-diacylglycerol: step 1/2. Its function is as follows. This protein catalyzes the committed step to the synthesis of the acidic phospholipids. In Haemophilus influenzae (strain ATCC 51907 / DSM 11121 / KW20 / Rd), this protein is CDP-diacylglycerol--glycerol-3-phosphate 3-phosphatidyltransferase (pgsA).